Here is a 234-residue protein sequence, read N- to C-terminus: MVDTKALRAEQLQRASEISLQDDIASESVRFIAGADVGFEQQGEVTRAAIAVLRYPSLELVEYQVARVATSLPYIPGLLSFREYPALLAAWAQIQQRPQLVFVDGQGIAHPRRLGVASHFGLLVDVPTIGVAKSRLCGNFEPLGDDNGALQPLVDADEQLGWVWRSKSRCNPLFISPGHRVSVGSALEWVQHCIAGYRLPEPTRWADAIASNRPQFQRWVRKSPDLLGKHRDMI.

Mg(2+) is bound by residues Asp36 and Asp104.

It belongs to the endonuclease V family. It depends on Mg(2+) as a cofactor.

The protein resides in the cytoplasm. It catalyses the reaction Endonucleolytic cleavage at apurinic or apyrimidinic sites to products with a 5'-phosphate.. DNA repair enzyme involved in the repair of deaminated bases. Selectively cleaves double-stranded DNA at the second phosphodiester bond 3' to a deoxyinosine leaving behind the intact lesion on the nicked DNA. In Yersinia enterocolitica serotype O:8 / biotype 1B (strain NCTC 13174 / 8081), this protein is Endonuclease V.